We begin with the raw amino-acid sequence, 968 residues long: Leucine--tRNA ligase (968 aa).

Over residues 1-13 (MTETPTGTQSSRE) the composition is skewed to polar residues. The segment at 1 to 22 (MTETPTGTQSSRETAADDTPRH) is disordered. A 'HIGH' region motif is present at residues 75-86 (PYPSGEGLHVGH). Residues 741 to 745 (KIGKS) carry the 'KMSKS' region motif. Lysine 744 provides a ligand contact to ATP.

Belongs to the class-I aminoacyl-tRNA synthetase family.

It localises to the cytoplasm. It carries out the reaction tRNA(Leu) + L-leucine + ATP = L-leucyl-tRNA(Leu) + AMP + diphosphate. This chain is Leucine--tRNA ligase, found in Mycolicibacterium vanbaalenii (strain DSM 7251 / JCM 13017 / BCRC 16820 / KCTC 9966 / NRRL B-24157 / PYR-1) (Mycobacterium vanbaalenii).